The following is a 408-amino-acid chain: Multidrug resistance protein MdtG (408 aa).

Transmembrane regions (helical) follow at residues 16 to 36, 58 to 78, 92 to 112, 115 to 135, 146 to 166, 173 to 193, 221 to 241, 256 to 276, 290 to 310, and 378 to 398; these read LIVA…VMPF, IVFS…GGLA, LGMG…QFLI, ALLG…ATQV, TLST…GLLA, PVFF…LFCI, ILSL…IAPI, VAFI…LSAP, ILIT…YVQT, and AVFL…WNSL.

It belongs to the major facilitator superfamily. DHA1 family. MdtG (TC 2.A.1.2.20) subfamily.

It is found in the cell inner membrane. In terms of biological role, confers resistance to fosfomycin and deoxycholate. The sequence is that of Multidrug resistance protein MdtG from Escherichia coli (strain SMS-3-5 / SECEC).